The sequence spans 98 residues: NADH-ubiquinone oxidoreductase chain 4L (98 aa).

3 helical membrane-spanning segments follow: residues 1-21 (MPLIHINIMMAFIMSLVGLLM), 29-49 (ALLCLEGMMLSLFILTALLAL), and 61-81 (IILLVFAACEAAIGLALLVMI).

The protein belongs to the complex I subunit 4L family. In terms of assembly, core subunit of respiratory chain NADH dehydrogenase (Complex I) which is composed of 45 different subunits.

The protein resides in the mitochondrion inner membrane. The enzyme catalyses a ubiquinone + NADH + 5 H(+)(in) = a ubiquinol + NAD(+) + 4 H(+)(out). Functionally, core subunit of the mitochondrial membrane respiratory chain NADH dehydrogenase (Complex I) which catalyzes electron transfer from NADH through the respiratory chain, using ubiquinone as an electron acceptor. Part of the enzyme membrane arm which is embedded in the lipid bilayer and involved in proton translocation. The chain is NADH-ubiquinone oxidoreductase chain 4L (MT-ND4L) from Kogia breviceps (Pygmy sperm whale).